The primary structure comprises 313 residues: Hydroxyacylglutathione hydrolase, mitochondrial (313 aa).

The Zn(2+) site is built by His107, His109, Asp111, His112, His163, and Asp187. Substrate is bound by residues 196–198 (KFF) and 226–228 (HEY). Residue His226 coordinates Zn(2+). Composition is skewed to basic and acidic residues over residues 285-294 (VQEHAGERDP) and 301-313 (IRKEKDHFKVPKD). The tract at residues 285–313 (VQEHAGERDPISTMGAIRKEKDHFKVPKD) is disordered. Substrate is bound at residue 302–305 (RKEK).

Belongs to the metallo-beta-lactamase superfamily. Glyoxalase II family. In terms of assembly, monomer. It depends on Zn(2+) as a cofactor.

It is found in the mitochondrion matrix. It localises to the cytoplasm. The enzyme catalyses an S-(2-hydroxyacyl)glutathione + H2O = a 2-hydroxy carboxylate + glutathione + H(+). The catalysed reaction is (R)-S-lactoylglutathione + H2O = (R)-lactate + glutathione + H(+). Its function is as follows. Thiolesterase that catalyzes the hydrolysis of S-D-lactoyl-glutathione to form glutathione and D-lactic acid. The protein is Hydroxyacylglutathione hydrolase, mitochondrial (hagh) of Xenopus tropicalis (Western clawed frog).